The chain runs to 345 residues: D-fructose 1,6-bisphosphatase class 2/sedoheptulose 1,7-bisphosphatase (345 aa).

Residues aspartate 33, glutamate 57, aspartate 97, and glutamate 100 each contribute to the Mn(2+) site. Substrate is bound by residues 100 to 102, tyrosine 131, 176 to 178, and 198 to 200; these read EGT, RDR, and DGD. A Mn(2+)-binding site is contributed by glutamate 225.

The protein belongs to the FBPase class 2 family. As to quaternary structure, homotetramer. Requires Mn(2+) as cofactor.

It catalyses the reaction beta-D-fructose 1,6-bisphosphate + H2O = beta-D-fructose 6-phosphate + phosphate. The catalysed reaction is D-sedoheptulose 1,7-bisphosphate + H2O = D-sedoheptulose 7-phosphate + phosphate. It participates in carbohydrate biosynthesis; Calvin cycle. Catalyzes the hydrolysis of fructose 1,6-bisphosphate (Fru 1,6-P2) and sedoheptulose 1,7-bisphosphate (Sed 1,7-P2) to fructose 6-phosphate and sedoheptulose 7-phosphate, respectively. This Nostoc sp. (strain PCC 7120 / SAG 25.82 / UTEX 2576) protein is D-fructose 1,6-bisphosphatase class 2/sedoheptulose 1,7-bisphosphatase.